A 424-amino-acid polypeptide reads, in one-letter code: Enolase (424 aa).

Gln165 lines the (2R)-2-phosphoglycerate pocket. Glu207 serves as the catalytic Proton donor. The Mg(2+) site is built by Asp244, Glu283, and Asp310. Lys335, Arg364, Ser365, and Lys386 together coordinate (2R)-2-phosphoglycerate. Lys335 functions as the Proton acceptor in the catalytic mechanism.

The protein belongs to the enolase family. Requires Mg(2+) as cofactor.

The protein resides in the cytoplasm. It is found in the secreted. It localises to the cell surface. The catalysed reaction is (2R)-2-phosphoglycerate = phosphoenolpyruvate + H2O. Its pathway is carbohydrate degradation; glycolysis; pyruvate from D-glyceraldehyde 3-phosphate: step 4/5. Its function is as follows. Catalyzes the reversible conversion of 2-phosphoglycerate (2-PG) into phosphoenolpyruvate (PEP). It is essential for the degradation of carbohydrates via glycolysis. This chain is Enolase, found in Chlamydia trachomatis serovar D (strain ATCC VR-885 / DSM 19411 / UW-3/Cx).